A 480-amino-acid chain; its full sequence is Adenosylhomocysteinase (480 aa).

3 residues coordinate substrate: T63, D142, and E203. 204–206 (TTT) provides a ligand contact to NAD(+). K233 and D237 together coordinate substrate. Residues N238, 267–272 (GYGDVG), E290, N325, 346–348 (IGH), and N394 contribute to the NAD(+) site.

Belongs to the adenosylhomocysteinase family. Requires NAD(+) as cofactor.

The protein localises to the cytoplasm. The enzyme catalyses S-adenosyl-L-homocysteine + H2O = L-homocysteine + adenosine. It participates in amino-acid biosynthesis; L-homocysteine biosynthesis; L-homocysteine from S-adenosyl-L-homocysteine: step 1/1. Its function is as follows. May play a key role in the regulation of the intracellular concentration of adenosylhomocysteine. The sequence is that of Adenosylhomocysteinase from Xylella fastidiosa (strain M12).